The chain runs to 214 residues: Intermembrane phospholipid transport system binding protein MlaC (214 aa).

A signal peptide spans 1–28 (MNLIQLKKWFTILTFVLTAFLVTRTAIA).

Belongs to the MlaC/ttg2D family.

It is found in the periplasm. Involved in a phospholipid transport pathway that maintains lipid asymmetry in the outer membrane by retrograde trafficking of phospholipids from the outer membrane to the inner membrane. May transfer phospholipid across the periplasmic space and deliver it to the MlaFEDB complex at the inner membrane. The sequence is that of Intermembrane phospholipid transport system binding protein MlaC from Haemophilus influenzae (strain ATCC 51907 / DSM 11121 / KW20 / Rd).